A 390-amino-acid chain; its full sequence is Mannitol-1-phosphate 5-dehydrogenase (390 aa).

7-18 (AVHFGGGNIGRG) serves as a coordination point for NAD(+). Lysine 216 is a catalytic residue.

Belongs to the mannitol dehydrogenase family. As to quaternary structure, monomer.

It catalyses the reaction D-mannitol 1-phosphate + NAD(+) = beta-D-fructose 6-phosphate + NADH + H(+). In terms of biological role, catalyzes the NAD(H)-dependent interconversion of D-fructose 6-phosphate and D-mannitol 1-phosphate in the mannitol metabolic pathway. Has a strong preference for NADH over NADPH. This Alternaria alternata (Alternaria rot fungus) protein is Mannitol-1-phosphate 5-dehydrogenase.